The sequence spans 544 residues: MVHPQLKRSIESLSFSGYKLTRRNLYNAPALKVMGRSVNNSSSNNNDQQQYNLESAKQNTQIVVIGAGLAGLSAAQHLLRHGFRSTIVLEATDRYGGRVNSKRFGDTYCELGAKWVNMNIDGAHNTIYELLRNAEGLRKQLKQRECANYVHTQGREVPPNMVELIDMQFRQLCRGFKVSEKVKSGGDLHVLDNVMAYFKTESEKLVGHSYPDPEKRALAREIFQSLFKEFSSILGCCLEYVNIEHITSCPVQQELRPLYVPTGLDNVLDTLTQHISKEQLQTGKPVGSIQWQTLSDFGAPTSPLPQERKCVACLDGTLYSADHIICTLPLGVLKNFSAILFKPALPLEKLQAIRNLGYGNPVKIYLAYKRPISRWLKSNLRPLGAQLGKDEPAITVNGRQERLWTQQVVEISQLPSSQHVLEIRVGGGYYDEIEKLPDVTLLEQITALLRQCLRNRLVPYPQALLRSNWSTSACYLGGRPYFSTTSSARDVQRLAEPLGDIAPTLLFAGDATALKGFGTIDGARTSGIREAQRIIDYYYLKQYM.

Its subcellular location is the cytoplasm. Its function is as follows. Has a non-vital function. The sequence is that of Protein anon-37Cs (anon-37Cs) from Drosophila lebanonensis (Fruit fly).